The sequence spans 192 residues: Fe/S biogenesis protein NfuA (192 aa).

Residues C149 and C152 each contribute to the [4Fe-4S] cluster site.

This sequence belongs to the NfuA family. Homodimer. [4Fe-4S] cluster is required as a cofactor.

In terms of biological role, involved in iron-sulfur cluster biogenesis. Binds a 4Fe-4S cluster, can transfer this cluster to apoproteins, and thereby intervenes in the maturation of Fe/S proteins. Could also act as a scaffold/chaperone for damaged Fe/S proteins. The polypeptide is Fe/S biogenesis protein NfuA (Tolumonas auensis (strain DSM 9187 / NBRC 110442 / TA 4)).